The chain runs to 127 residues: MNQTVKAKKKKKTITLGVVHIRASFNNTIVTFTDVQGNAISSASAGANGFKGAKKATPYAAQITIDKAAEKAKEYGLKTISIRIGGPGAQRESAMRALFGQNFVVTSILDVSSIAHNGVKAPKRRRV.

Belongs to the universal ribosomal protein uS11 family. Part of the 30S ribosomal subunit. Interacts with proteins S7 and S18. Binds to IF-3.

Functionally, located on the platform of the 30S subunit, it bridges several disparate RNA helices of the 16S rRNA. Forms part of the Shine-Dalgarno cleft in the 70S ribosome. The chain is Small ribosomal subunit protein uS11 from Rickettsia bellii (strain RML369-C).